A 356-amino-acid chain; its full sequence is Holliday junction branch migration complex subunit RuvB (356 aa).

The segment at 4–190 (TDKLAAERII…FGIVARLEFY (187 aa)) is large ATPase domain (RuvB-L). Residues L29, R30, G71, K74, T75, T76, 137-139 (EDY), R180, Y190, and R227 each bind ATP. T75 lines the Mg(2+) pocket. Positions 191–261 (DAEQLSRIVR…VADAALAMLD (71 aa)) are small ATPAse domain (RuvB-S). The segment at 264–356 (PVGFDLMDRK…NLWDTPDAER (93 aa)) is head domain (RuvB-H). Residues R300, R319, and R324 each coordinate DNA.

The protein belongs to the RuvB family. Homohexamer. Forms an RuvA(8)-RuvB(12)-Holliday junction (HJ) complex. HJ DNA is sandwiched between 2 RuvA tetramers; dsDNA enters through RuvA and exits via RuvB. An RuvB hexamer assembles on each DNA strand where it exits the tetramer. Each RuvB hexamer is contacted by two RuvA subunits (via domain III) on 2 adjacent RuvB subunits; this complex drives branch migration. In the full resolvosome a probable DNA-RuvA(4)-RuvB(12)-RuvC(2) complex forms which resolves the HJ.

Its subcellular location is the cytoplasm. It catalyses the reaction ATP + H2O = ADP + phosphate + H(+). In terms of biological role, the RuvA-RuvB-RuvC complex processes Holliday junction (HJ) DNA during genetic recombination and DNA repair, while the RuvA-RuvB complex plays an important role in the rescue of blocked DNA replication forks via replication fork reversal (RFR). RuvA specifically binds to HJ cruciform DNA, conferring on it an open structure. The RuvB hexamer acts as an ATP-dependent pump, pulling dsDNA into and through the RuvAB complex. RuvB forms 2 homohexamers on either side of HJ DNA bound by 1 or 2 RuvA tetramers; 4 subunits per hexamer contact DNA at a time. Coordinated motions by a converter formed by DNA-disengaged RuvB subunits stimulates ATP hydrolysis and nucleotide exchange. Immobilization of the converter enables RuvB to convert the ATP-contained energy into a lever motion, pulling 2 nucleotides of DNA out of the RuvA tetramer per ATP hydrolyzed, thus driving DNA branch migration. The RuvB motors rotate together with the DNA substrate, which together with the progressing nucleotide cycle form the mechanistic basis for DNA recombination by continuous HJ branch migration. Branch migration allows RuvC to scan DNA until it finds its consensus sequence, where it cleaves and resolves cruciform DNA. The chain is Holliday junction branch migration complex subunit RuvB from Burkholderia thailandensis (strain ATCC 700388 / DSM 13276 / CCUG 48851 / CIP 106301 / E264).